The following is a 376-amino-acid chain: ORC1-type DNA replication protein 2 (376 aa).

ATP contacts are provided by residues 73-77, Tyr209, and Arg221; that span reads TGKTS.

It belongs to the CDC6/cdc18 family.

Functionally, involved in regulation of DNA replication. The polypeptide is ORC1-type DNA replication protein 2 (cdc6-2) (Archaeoglobus fulgidus (strain ATCC 49558 / DSM 4304 / JCM 9628 / NBRC 100126 / VC-16)).